The chain runs to 306 residues: tRNA pseudouridine synthase B (306 aa).

Catalysis depends on D46, which acts as the Nucleophile.

This sequence belongs to the pseudouridine synthase TruB family. Type 1 subfamily.

It carries out the reaction uridine(55) in tRNA = pseudouridine(55) in tRNA. Its function is as follows. Responsible for synthesis of pseudouridine from uracil-55 in the psi GC loop of transfer RNAs. This Gluconacetobacter diazotrophicus (strain ATCC 49037 / DSM 5601 / CCUG 37298 / CIP 103539 / LMG 7603 / PAl5) protein is tRNA pseudouridine synthase B.